The following is a 244-amino-acid chain: Type III pantothenate kinase (244 aa).

7–14 (DIGNTRLK) is a binding site for ATP. Substrate is bound by residues Tyr95 and 102-105 (GIDR). The active-site Proton acceptor is the Asp104. Thr126 is an ATP binding site. Thr177 provides a ligand contact to substrate.

It belongs to the type III pantothenate kinase family. As to quaternary structure, homodimer. NH4(+) is required as a cofactor. Requires K(+) as cofactor.

The protein resides in the cytoplasm. The catalysed reaction is (R)-pantothenate + ATP = (R)-4'-phosphopantothenate + ADP + H(+). The protein operates within cofactor biosynthesis; coenzyme A biosynthesis; CoA from (R)-pantothenate: step 1/5. Its function is as follows. Catalyzes the phosphorylation of pantothenate (Pan), the first step in CoA biosynthesis. The sequence is that of Type III pantothenate kinase from Acinetobacter baumannii (strain AB307-0294).